Reading from the N-terminus, the 1043-residue chain is NACHT, LRR and PYD domains-containing protein 13 (1043 aa).

The Pyrin domain occupies 1–107 (MNFSVITCPN…CEKVRAEMKE (107 aa)). In terms of domain architecture, NACHT spans 229–558 (QTIVLVGRAG…VLEEPREFPP (330 aa)). 235–242 (GRAGVGKT) is a binding site for ATP. 7 LRR repeats span residues 725–749 (NENLHELDLSNSKLHASSVKGLCLA), 781–804 (NSKLTHLNFSSNKLGMTVPLILKA), 837–864 (IQHVTRLCLGFNRLQDDGIKLLCAALTH), 894–917 (NRSLTHLNLSKNSLRDEGVKFLCE), 923–946 (DGNLQSLNLSGCSFTREGCGELAN), 951–978 (NHNVKILDLGENDLQDDGVKLLCEALKP), and 1007–1030 (SKSLVNLNLLGNELDTDGVKMLCK).

Belongs to the NLRP family.

Functionally, involved in inflammation. The protein is NACHT, LRR and PYD domains-containing protein 13 (NLRP13) of Homo sapiens (Human).